Consider the following 257-residue polypeptide: Thiazole synthase (257 aa).

The Schiff-base intermediate with DXP role is filled by K96. 1-deoxy-D-xylulose 5-phosphate-binding positions include G157, 184-185 (AG), and 206-207 (NT).

It belongs to the ThiG family. In terms of assembly, homotetramer. Forms heterodimers with either ThiH or ThiS.

It is found in the cytoplasm. The catalysed reaction is [ThiS sulfur-carrier protein]-C-terminal-Gly-aminoethanethioate + 2-iminoacetate + 1-deoxy-D-xylulose 5-phosphate = [ThiS sulfur-carrier protein]-C-terminal Gly-Gly + 2-[(2R,5Z)-2-carboxy-4-methylthiazol-5(2H)-ylidene]ethyl phosphate + 2 H2O + H(+). It participates in cofactor biosynthesis; thiamine diphosphate biosynthesis. Functionally, catalyzes the rearrangement of 1-deoxy-D-xylulose 5-phosphate (DXP) to produce the thiazole phosphate moiety of thiamine. Sulfur is provided by the thiocarboxylate moiety of the carrier protein ThiS. In vitro, sulfur can be provided by H(2)S. This chain is Thiazole synthase, found in Rhizobium etli (strain ATCC 51251 / DSM 11541 / JCM 21823 / NBRC 15573 / CFN 42).